Consider the following 90-residue polypeptide: UPF0297 protein lmo1503 (90 aa).

The protein belongs to the UPF0297 family.

The protein is UPF0297 protein lmo1503 of Listeria monocytogenes serovar 1/2a (strain ATCC BAA-679 / EGD-e).